The primary structure comprises 1602 residues: Mediator of RNA polymerase II transcription subunit 26 (1602 aa).

Residues 8 to 85 (QLTSHLSQAL…KMWREMVGIQ (78 aa)) enclose the TFIIS N-terminal domain. Disordered regions lie at residues 86-108 (QTAN…PSAH), 238-298 (VTDS…AQNE), 399-481 (EDSI…KGVD), 580-617 (FSNK…SLDS), and 694-736 (SDNG…MDTP). Residues 273–285 (RPKKFKKDKKHKE) show a composition bias toward basic residues. The span at 401-414 (SITNDSSTSCSRLS) shows a compositional bias: polar residues. The span at 418–431 (VEERRKSDKIDDSI) shows a compositional bias: basic and acidic residues. A compositionally biased stretch (basic residues) spans 467–477 (VPKKRGRKKGS). Over residues 587–604 (AGNTDSDTITSEPSQDSN) the composition is skewed to polar residues. Positions 715 to 728 (KQEEQLPKLERLSD) are enriched in basic and acidic residues. Residues 792 to 820 (LDVASVNADTVQNQINSHNQEGETSEEQN) adopt a coiled-coil conformation. Disordered stretches follow at residues 1035–1158 (FEET…EVEN) and 1372–1407 (NTSA…NESD). Low complexity predominate over residues 1056–1070 (SSSSNSSCSNSSNSS). Positions 1073-1083 (KTQDSINEKLR) are enriched in basic and acidic residues. Basic residues predominate over residues 1101–1112 (RKRRGKNRKKRN). The segment covering 1124–1143 (ISLNGTISNLSSSNNSSSSE) has biased composition (low complexity). Acidic residues predominate over residues 1144-1158 (SETETGLENENEVEN). Residues 1378–1388 (TVSEDPLKIEE) are compositionally biased toward basic and acidic residues.

This sequence belongs to the Mediator complex subunit 26 family. Component of the Mediator complex.

The protein localises to the nucleus. Component of the Mediator complex, a coactivator involved in the regulated transcription of nearly all RNA polymerase II-dependent genes. Mediator functions as a bridge to convey information from gene-specific regulatory proteins to the basal RNA polymerase II transcription machinery. Mediator is recruited to promoters by direct interactions with regulatory proteins and serves as a scaffold for the assembly of a functional preinitiation complex with RNA polymerase II and the general transcription factors. The protein is Mediator of RNA polymerase II transcription subunit 26 (MED26) of Drosophila pseudoobscura pseudoobscura (Fruit fly).